Here is a 50-residue protein sequence, read N- to C-terminus: MAREGFTLACKECKMENYISKKNKKKHVEKLEINKFCSKCNSKTMHREKK.

This sequence belongs to the bacterial ribosomal protein bL33 family.

The chain is Large ribosomal subunit protein bL33A (rpmG1) from Mycoplasmopsis pulmonis (strain UAB CTIP) (Mycoplasma pulmonis).